The sequence spans 303 residues: Ornithine carbamoyltransferase (303 aa).

Residues S52 to T55, Q79, R103, and H130 to Q133 each bind carbamoyl phosphate. Residues N161, D222, and S226–M227 contribute to the L-ornithine site. Carbamoyl phosphate contacts are provided by residues C262–L263 and R290.

The protein belongs to the aspartate/ornithine carbamoyltransferase superfamily. OTCase family.

The protein resides in the cytoplasm. It catalyses the reaction carbamoyl phosphate + L-ornithine = L-citrulline + phosphate + H(+). It participates in amino-acid biosynthesis; L-arginine biosynthesis; L-arginine from L-ornithine and carbamoyl phosphate: step 1/3. Reversibly catalyzes the transfer of the carbamoyl group from carbamoyl phosphate (CP) to the N(epsilon) atom of ornithine (ORN) to produce L-citrulline. This Geobacter metallireducens (strain ATCC 53774 / DSM 7210 / GS-15) protein is Ornithine carbamoyltransferase.